Here is a 249-residue protein sequence, read N- to C-terminus: Type III pantothenate kinase (249 aa).

6–13 (DVGNTHTT) serves as a coordination point for ATP. 101–104 (GADR) lines the substrate pocket. The active-site Proton acceptor is D103. A K(+)-binding site is contributed by D123. Residue T126 coordinates ATP. Substrate is bound at residue T177.

The protein belongs to the type III pantothenate kinase family. In terms of assembly, homodimer. NH4(+) is required as a cofactor. Requires K(+) as cofactor.

Its subcellular location is the cytoplasm. The catalysed reaction is (R)-pantothenate + ATP = (R)-4'-phosphopantothenate + ADP + H(+). It functions in the pathway cofactor biosynthesis; coenzyme A biosynthesis; CoA from (R)-pantothenate: step 1/5. Functionally, catalyzes the phosphorylation of pantothenate (Pan), the first step in CoA biosynthesis. This Thermosipho africanus (strain TCF52B) protein is Type III pantothenate kinase.